The following is a 149-amino-acid chain: Large ribosomal subunit protein bL9 (149 aa).

This sequence belongs to the bacterial ribosomal protein bL9 family.

Binds to the 23S rRNA. The chain is Large ribosomal subunit protein bL9 from Amoebophilus asiaticus (strain 5a2).